A 173-amino-acid polypeptide reads, in one-letter code: Crossover junction endodeoxyribonuclease RuvC (173 aa).

Residues aspartate 8, glutamate 67, and aspartate 139 contribute to the active site. Residues aspartate 8, glutamate 67, and aspartate 139 each contribute to the Mg(2+) site.

The protein belongs to the RuvC family. As to quaternary structure, homodimer which binds Holliday junction (HJ) DNA. The HJ becomes 2-fold symmetrical on binding to RuvC with unstacked arms; it has a different conformation from HJ DNA in complex with RuvA. In the full resolvosome a probable DNA-RuvA(4)-RuvB(12)-RuvC(2) complex forms which resolves the HJ. It depends on Mg(2+) as a cofactor.

Its subcellular location is the cytoplasm. The enzyme catalyses Endonucleolytic cleavage at a junction such as a reciprocal single-stranded crossover between two homologous DNA duplexes (Holliday junction).. The RuvA-RuvB-RuvC complex processes Holliday junction (HJ) DNA during genetic recombination and DNA repair. Endonuclease that resolves HJ intermediates. Cleaves cruciform DNA by making single-stranded nicks across the HJ at symmetrical positions within the homologous arms, yielding a 5'-phosphate and a 3'-hydroxyl group; requires a central core of homology in the junction. The consensus cleavage sequence is 5'-(A/T)TT(C/G)-3'. Cleavage occurs on the 3'-side of the TT dinucleotide at the point of strand exchange. HJ branch migration catalyzed by RuvA-RuvB allows RuvC to scan DNA until it finds its consensus sequence, where it cleaves and resolves the cruciform DNA. The chain is Crossover junction endodeoxyribonuclease RuvC from Shewanella frigidimarina (strain NCIMB 400).